A 51-amino-acid polypeptide reads, in one-letter code: Magnetosome protein Mms5 (51 aa).

Residues 1-8 (MLSAKGVS) are Lumenal-facing. The interval 9–16 (LGLGLGLG) is LG region. A helical transmembrane segment spans residues 9–29 (LGLGLGLGAWGPVLLGVVGVA). The Cytoplasmic portion of the chain corresponds to 30–51 (GALALYGYYKNRNAEPAAAEAV).

The protein belongs to the magnetosome MamD/Mms5 family. Post-translationally, may undergo N-terminal cleavage.

The protein localises to the magnetosome membrane. Its function is as follows. Might be involved in magnetite crystal growth. This Magnetospirillum gryphiswaldense (strain DSM 6361 / JCM 21280 / NBRC 15271 / MSR-1) protein is Magnetosome protein Mms5.